The sequence spans 226 residues: UPF0319 protein YpAngola_A3206 (226 aa).

The N-terminal stretch at 1–20 (MKLGLVAGMLAVCFSFSSVA) is a signal peptide.

This sequence belongs to the UPF0319 family.

The protein is UPF0319 protein YpAngola_A3206 of Yersinia pestis bv. Antiqua (strain Angola).